The primary structure comprises 527 residues: Serine/threonine-protein kinase NLK (527 aa).

Sufficient for interaction with DAPK3 stretches follow at residues 1–125 (MSLC…KAHH) and 124–416 (HHHQ…SKRI). 2 required for interaction with TAB2 regions span residues 1–304 (MSLC…VVTQ) and 434–527 (YHTC…LVWE). 2 disordered regions span residues 22–72 (AAAA…SSAA) and 90–140 (QQPY…DIEP). The segment covering 26-54 (GHHHHHHHHLPHLPPPHLHHHHHPQHHLH) has biased composition (basic residues). Residues 103–119 (PGPAAAAPAQVQAAAAA) show a composition bias toward low complexity. The segment covering 122–131 (KAHHHQHSHH) has biased composition (basic residues). A Protein kinase domain is found at 138 to 427 (IEPDRPIGYG…AKDALAHPYL (290 aa)). ATP is bound by residues 144–152 (IGYGAFGVV) and lysine 167. Catalysis depends on aspartate 264, which acts as the Proton acceptor. Threonine 298 carries the phosphothreonine; by autocatalysis modification. The TQE motif lies at 298 to 300 (TQE). Residues 428–527 (DEGRLRYHTC…EMPPSPLVWE (100 aa)) are required for homodimerization and kinase activation and localization to the nucleus. Phosphoserine is present on serine 522.

The protein belongs to the protein kinase superfamily. CMGC Ser/Thr protein kinase family. MAP kinase subfamily. In terms of assembly, homodimer. Homodimerization is required for intermolecular autophosphorylation, kinase activation and nuclear localization. May interact with components of cullin-RING-based SCF (SKP1-CUL1-F-box protein) E3 ubiquitin-protein ligase complexes. Interacts with LEF1, MEF2A, MYBL1 and MYBL2. Interacts with the upstream activating kinases HIPK2 and MAP3K7/TAK1. Interaction with MAP3K7/TAK1 seems to be indirect, and may be mediated by other proteins such as STAT3, TAB1 and TAB2. Interacts with and phosphorylates a number of transcription factors including FOXO1, FOXO3, FOXO4, MYB, NOTCH1 and TCF7L2/TCF4. Interacts with DAPK3/ZIPK, and this interaction may disrupt interaction with transcription factors such as TCF7L2/TCF4. Forms a transcriptional repressor complex with CHD7, PPARG and SETDB1. Interacts with RNF138/NARF. Interacts with ATF5; the interaction stabilizes ATF5 at the protein level in a kinase-independent manner. It depends on Mg(2+) as a cofactor. In terms of processing, phosphorylated on Thr-298. Intermolecular autophosphorylation on Thr-298 activates the enzyme.

It localises to the nucleus. It is found in the cytoplasm. It carries out the reaction L-seryl-[protein] + ATP = O-phospho-L-seryl-[protein] + ADP + H(+). It catalyses the reaction L-threonyl-[protein] + ATP = O-phospho-L-threonyl-[protein] + ADP + H(+). Activated by the non-canonical Wnt signaling pathway, in which WNT5A leads to activation of MAP3K7/TAK1 and HIPK2, which subsequently phosphorylates and activates this protein. Activated by dimerization and subsequent intermolecular autophosphorylation on Thr-298. Other cytokines such as IL6 may also activate this regulatory circuit. Serine/threonine-protein kinase that regulates a number of transcription factors with key roles in cell fate determination. Positive effector of the non-canonical Wnt signaling pathway, acting downstream of WNT5A, MAP3K7/TAK1 and HIPK2. Negative regulator of the canonical Wnt/beta-catenin signaling pathway. Binds to and phosphorylates TCF7L2/TCF4 and LEF1, promoting the dissociation of the TCF7L2/LEF1/beta-catenin complex from DNA, as well as the ubiquitination and subsequent proteolysis of LEF1. Together these effects inhibit the transcriptional activation of canonical Wnt/beta-catenin target genes. Negative regulator of the Notch signaling pathway. Binds to and phosphorylates NOTCH1, thereby preventing the formation of a transcriptionally active ternary complex of NOTCH1, RBPJ/RBPSUH and MAML1. Negative regulator of the MYB family of transcription factors. Phosphorylation of MYB leads to its subsequent proteolysis while phosphorylation of MYBL1 and MYBL2 inhibits their interaction with the coactivator CREBBP. Other transcription factors may also be inhibited by direct phosphorylation of CREBBP itself. Acts downstream of IL6 and MAP3K7/TAK1 to phosphorylate STAT3, which is in turn required for activation of NLK by MAP3K7/TAK1. Upon IL1B stimulus, cooperates with ATF5 to activate the transactivation activity of C/EBP subfamily members. Phosphorylates ATF5 but also stabilizes ATF5 protein levels in a kinase-independent manner. Acts as an inhibitor of the mTORC1 complex in response to osmotic stress by mediating phosphorylation of RPTOR, thereby preventing recruitment of the mTORC1 complex to lysosomes. The protein is Serine/threonine-protein kinase NLK (NLK) of Canis lupus familiaris (Dog).